A 246-amino-acid polypeptide reads, in one-letter code: Probable transcriptional regulatory protein YebC (246 aa).

The interval 1–20 (MAGHSKWANTRHRKAAQDAK) is disordered.

Belongs to the TACO1 family.

It is found in the cytoplasm. This Shigella boydii serotype 4 (strain Sb227) protein is Probable transcriptional regulatory protein YebC.